The sequence spans 68 residues: Large ribosomal subunit protein uL29 (68 aa).

The protein belongs to the universal ribosomal protein uL29 family.

The sequence is that of Large ribosomal subunit protein uL29 from Albidiferax ferrireducens (strain ATCC BAA-621 / DSM 15236 / T118) (Rhodoferax ferrireducens).